A 225-amino-acid polypeptide reads, in one-letter code: Orotate phosphoribosyltransferase (225 aa).

5-phospho-alpha-D-ribose 1-diphosphate is bound at residue Lys31. 39-40 (FF) contacts orotate. 5-phospho-alpha-D-ribose 1-diphosphate-binding positions include 78-79 (YK), Arg105, Lys106, Lys109, His111, and 130-138 (DDVLTSGKA). Orotate contacts are provided by Thr134 and Arg163.

It belongs to the purine/pyrimidine phosphoribosyltransferase family. PyrE subfamily. As to quaternary structure, homodimer.

It carries out the reaction orotidine 5'-phosphate + diphosphate = orotate + 5-phospho-alpha-D-ribose 1-diphosphate. The protein operates within pyrimidine metabolism; UMP biosynthesis via de novo pathway; UMP from orotate: step 1/2. Its function is as follows. Catalyzes the transfer of a ribosyl phosphate group from 5-phosphoribose 1-diphosphate to orotate, leading to the formation of orotidine monophosphate (OMP). This chain is Orotate phosphoribosyltransferase (URA5), found in Cryptococcus neoformans var. neoformans serotype D (strain B-3501A) (Filobasidiella neoformans).